The sequence spans 420 residues: Histidine--tRNA ligase (420 aa).

It belongs to the class-II aminoacyl-tRNA synthetase family. In terms of assembly, homodimer.

Its subcellular location is the cytoplasm. The catalysed reaction is tRNA(His) + L-histidine + ATP = L-histidyl-tRNA(His) + AMP + diphosphate + H(+). The polypeptide is Histidine--tRNA ligase (Nitrosomonas europaea (strain ATCC 19718 / CIP 103999 / KCTC 2705 / NBRC 14298)).